The sequence spans 431 residues: Phosphate regulon sensor protein PhoR (431 aa).

Topologically, residues 1–13 are cytoplasmic; it reads MLERLSWKRLALE. A helical transmembrane segment spans residues 14–34; the sequence is LFLACIPALILGAFVGHLPWF. Residues 35–38 are Periplasmic-facing; that stretch reads LLAA. A helical membrane pass occupies residues 39-59; the sequence is VTGLLIWHFWNLMRLSWWLWV. At 60–431 the chain is on the cytoplasmic side; sequence DRSMTPPPGR…PERLIARNDA (372 aa). Residues 98-166 enclose the PAS domain; it reads KRFRSGAESL…KQRDFSKPLN (69 aa). In terms of domain architecture, Histidine kinase spans 210-425; that stretch reads NVSHELRTPL…RFSFLLPERL (216 aa). Histidine 213 carries the phosphohistidine; by autocatalysis modification.

It is found in the cell inner membrane. The enzyme catalyses ATP + protein L-histidine = ADP + protein N-phospho-L-histidine.. In terms of biological role, member of the two-component regulatory system PhoR/PhoB involved in the phosphate regulon genes expression. PhoR may function as a membrane-associated protein kinase that phosphorylates PhoB in response to environmental signals. This is Phosphate regulon sensor protein PhoR (phoR) from Klebsiella pneumoniae.